The primary structure comprises 231 residues: Orotidine 5'-phosphate decarboxylase (231 aa).

Substrate is bound by residues Asp-11, Lys-33, 60–69 (DLKFHDIPNT), Thr-120, Arg-181, Gln-190, Gly-210, and Arg-211. Catalysis depends on Lys-62, which acts as the Proton donor.

This sequence belongs to the OMP decarboxylase family. Type 1 subfamily. Homodimer.

It catalyses the reaction orotidine 5'-phosphate + H(+) = UMP + CO2. It participates in pyrimidine metabolism; UMP biosynthesis via de novo pathway; UMP from orotate: step 2/2. In terms of biological role, catalyzes the decarboxylation of orotidine 5'-monophosphate (OMP) to uridine 5'-monophosphate (UMP). The chain is Orotidine 5'-phosphate decarboxylase from Vibrio cholerae serotype O1 (strain ATCC 39315 / El Tor Inaba N16961).